Here is a 561-residue protein sequence, read N- to C-terminus: Potassium-transporting ATPase potassium-binding subunit (561 aa).

A run of 11 helical transmembrane segments spans residues 5–25 (LAAG…YVPL), 60–80 (CGYA…LYVL), 86–106 (VLPL…NTAV), 131–151 (GLAV…VALI), 177–197 (ILLP…VIQS), 247–267 (PTPL…VALT), 281–301 (LTVL…TTAA), 376–396 (GLYG…LLVG), 415–435 (ALAV…TVVL), 489–509 (LGLC…ALAG), and 531–551 (FAGL…FPVL).

The protein belongs to the KdpA family. The system is composed of three essential subunits: KdpA, KdpB and KdpC.

The protein resides in the cell membrane. Its function is as follows. Part of the high-affinity ATP-driven potassium transport (or Kdp) system, which catalyzes the hydrolysis of ATP coupled with the electrogenic transport of potassium into the cytoplasm. This subunit binds the extracellular potassium ions and delivers the ions to the membrane domain of KdpB through an intramembrane tunnel. The polypeptide is Potassium-transporting ATPase potassium-binding subunit (Nocardia farcinica (strain IFM 10152)).